A 312-amino-acid chain; its full sequence is Lipid-translocating exporter-like protein RTA1 (312 aa).

The tract at residues 1–21 (MSPESKKITAHGSTSMPLSRT) is disordered. A compositionally biased stretch (polar residues) spans 11–21 (HGSTSMPLSRT). The next 6 membrane-spanning stretches (helical) occupy residues 29–49 (IPLTVGAIFSVIGFLQRFFLA), 61–81 (LSTMFILGAGPTYAGADYFIC), 103–123 (FITFDVLAEVCVWTGAGLLAG), 142–162 (AMITQAFLFTSFVAILASFHV), 183–203 (FMMVVHSLYASSIFIIIRSAY), and 223–243 (SLMLLNTAMFNVFHPGHILPI). Residues Asn-258 and Asn-304 are each glycosylated (N-linked (GlcNAc...) asparagine).

The protein belongs to the lipid-translocating exporter (LTE) (TC 9.A.26.1) family.

The protein resides in the membrane. It participates in siderophore biosynthesis. Lipid-translocating exporter-like protein; part of the gene cluster that mediates the biosynthesis of hydroxamate-containing siderophores that play a critical role in virulence via intracellular iron acquisition during macrophage infection. The protein is Lipid-translocating exporter-like protein RTA1 of Ajellomyces capsulatus (Darling's disease fungus).